Consider the following 258-residue polypeptide: 5'-nucleotidase SurE (258 aa).

Residues aspartate 18, aspartate 19, serine 49, and asparagine 102 each contribute to the a divalent metal cation site.

Belongs to the SurE nucleotidase family. A divalent metal cation serves as cofactor.

It is found in the cytoplasm. The catalysed reaction is a ribonucleoside 5'-phosphate + H2O = a ribonucleoside + phosphate. In terms of biological role, nucleotidase that shows phosphatase activity on nucleoside 5'-monophosphates. The sequence is that of 5'-nucleotidase SurE from Vibrio campbellii (strain ATCC BAA-1116).